Reading from the N-terminus, the 403-residue chain is Phosphoglycerate kinase (403 aa).

Substrate is bound by residues 24 to 26 (DLN), R39, 62 to 65 (HLGR), R121, and R161. Residues K211, G299, E330, and 359-362 (GGDS) each bind ATP.

The protein belongs to the phosphoglycerate kinase family. As to quaternary structure, monomer.

It is found in the cytoplasm. The enzyme catalyses (2R)-3-phosphoglycerate + ATP = (2R)-3-phospho-glyceroyl phosphate + ADP. Its pathway is carbohydrate degradation; glycolysis; pyruvate from D-glyceraldehyde 3-phosphate: step 2/5. The protein is Phosphoglycerate kinase of Corynebacterium jeikeium (strain K411).